The sequence spans 213 residues: 3-isopropylmalate dehydratase small subunit (213 aa).

It belongs to the LeuD family. LeuD type 1 subfamily. As to quaternary structure, heterodimer of LeuC and LeuD.

It catalyses the reaction (2R,3S)-3-isopropylmalate = (2S)-2-isopropylmalate. It functions in the pathway amino-acid biosynthesis; L-leucine biosynthesis; L-leucine from 3-methyl-2-oxobutanoate: step 2/4. Its function is as follows. Catalyzes the isomerization between 2-isopropylmalate and 3-isopropylmalate, via the formation of 2-isopropylmaleate. This is 3-isopropylmalate dehydratase small subunit from Neisseria meningitidis serogroup C (strain 053442).